A 358-amino-acid polypeptide reads, in one-letter code: Putative UDP-kanosamine synthase oxidoreductase subunit (358 aa).

Interacts with RifK.

The catalysed reaction is UDP-alpha-D-glucose + NAD(+) = UDP-3-oxo-alpha-D-glucose + NADH + H(+). Its pathway is antibiotic biosynthesis; rifamycin B biosynthesis. Functionally, in a complex with RifK, RifL may catalyze the oxidation of UDP-glucose to UDP-3-keto-D-glucose, which would then be used by RifK to produce UDP-kanosamine. Is not able to use dTDP-glucose as substrate. The sequence is that of Putative UDP-kanosamine synthase oxidoreductase subunit (rifL) from Amycolatopsis mediterranei (strain S699) (Nocardia mediterranei).